A 446-amino-acid polypeptide reads, in one-letter code: Tryptophan synthase beta chain 2 (446 aa).

Lysine 110 bears the N6-(pyridoxal phosphate)lysine mark.

The protein belongs to the TrpB family. As to quaternary structure, tetramer of two alpha and two beta chains. Pyridoxal 5'-phosphate is required as a cofactor.

It catalyses the reaction (1S,2R)-1-C-(indol-3-yl)glycerol 3-phosphate + L-serine = D-glyceraldehyde 3-phosphate + L-tryptophan + H2O. It participates in amino-acid biosynthesis; L-tryptophan biosynthesis; L-tryptophan from chorismate: step 5/5. In terms of biological role, the beta subunit is responsible for the synthesis of L-tryptophan from indole and L-serine. The sequence is that of Tryptophan synthase beta chain 2 (trpB2) from Pyrococcus furiosus (strain ATCC 43587 / DSM 3638 / JCM 8422 / Vc1).